The following is a 401-amino-acid chain: Enoyl-[acyl-carrier-protein] reductase [NADH] 1 (401 aa).

Residues 48 to 53 (GSSSGY), 74 to 75 (FE), 111 to 112 (DA), and 139 to 140 (LA) each bind NAD(+). Position 225 (Tyr-225) interacts with substrate. Catalysis depends on Tyr-235, which acts as the Proton donor. NAD(+) contacts are provided by residues Lys-244 and 273–275 (VVT).

The protein belongs to the TER reductase family. As to quaternary structure, monomer.

It catalyses the reaction a 2,3-saturated acyl-[ACP] + NAD(+) = a (2E)-enoyl-[ACP] + NADH + H(+). The enzyme catalyses a 2,3-saturated acyl-CoA + NAD(+) = a (2E)-enoyl-CoA + NADH + H(+). The catalysed reaction is (2E)-butenoyl-[ACP] + NADH + H(+) = butanoyl-[ACP] + NAD(+). It carries out the reaction butanoyl-CoA + NAD(+) = (2E)-butenoyl-CoA + NADH + H(+). It functions in the pathway lipid metabolism; fatty acid biosynthesis. Weakly inhibited by triclosan. In terms of biological role, involved in the final reduction of the elongation cycle of fatty acid synthesis (FAS II). Catalyzes the NADH-dependent reduction of a carbon-carbon double bond in an enoyl moiety that is covalently linked to an acyl carrier protein (ACP). It can use both crotonyl-CoA and crotonyl-ACP. In Vibrio cholerae serotype O1 (strain ATCC 39315 / El Tor Inaba N16961), this protein is Enoyl-[acyl-carrier-protein] reductase [NADH] 1.